Consider the following 52-residue polypeptide: Large ribosomal subunit protein bL32c (52 aa).

It belongs to the bacterial ribosomal protein bL32 family.

The protein localises to the plastid. It localises to the chloroplast. The chain is Large ribosomal subunit protein bL32c from Citrus sinensis (Sweet orange).